A 342-amino-acid polypeptide reads, in one-letter code: MSELFKEMTKEERKIYYLKEWNVKKIPSFITKTLENREFGFDHTGEGPNDRKNVFHHIKDLEDYVKITAPYSIYSSVALYEEPKNMEGWLGAELVFDIDAKDLPLKRCNHETGKVCPICLDDAKELTKDTLLILREDFGFENIHLIYSGRGYHIRVLDDWALGLDSKAREKILSYISSAEEITFEDLQERKILLSSGYYRVFRLRFGYFIKRVSEYHLRNIGLNKRQIEQIIDGRDEIYENFVKKAMISAFSQGVGYKTLLRLFSLSTTFSKAYFDGRVTVDVKRILRVPSSLHSKVGLVATYIGNDEKDLEKFNPFKDAVPKFREKEVKEAYDLWKETMEE.

Active-site residues include D97, D99, and D276.

It belongs to the eukaryotic-type primase small subunit family. Heterodimer of a small subunit (PriS) and a large subunit (PriL). Mg(2+) is required as a cofactor. Requires Mn(2+) as cofactor.

Functionally, catalytic subunit of DNA primase, an RNA polymerase that catalyzes the synthesis of short RNA molecules used as primers for DNA polymerase during DNA replication. The small subunit contains the primase catalytic core and has DNA synthesis activity on its own. Binding to the large subunit stabilizes and modulates the activity, increasing the rate of DNA synthesis while decreasing the length of the DNA fragments, and conferring RNA synthesis capability. The DNA polymerase activity may enable DNA primase to also catalyze primer extension after primer synthesis. May also play a role in DNA repair. This chain is DNA primase small subunit PriS, found in Thermococcus sibiricus (strain DSM 12597 / MM 739).